We begin with the raw amino-acid sequence, 281 residues long: MAIKKFKAYTNGRRNMSSLDYQANLSGHRPEKSLLVALPTHSGRNNQGKITTRHHGGRLKRFYRLVDFKRNKDDILATVKTIEYDPNRSANISLVVYADGEKRYIISPKGLKVGQKIISGEQVDIQIGNSLPLKNIPEGTYVHNIEMQPKQGGVIARSAGSSAQILGKDETGRYIILRLKSGEVRKILALCRATVGEVGNEEHSLVNIGKAGRNRLRGIRPTVRGSAMNPNDHPHGGGEGHQPIGRKSPMTPWGKKALGVKTRKTKKASNQFIIRRRKESK.

The segment at 224–281 (RGSAMNPNDHPHGGGEGHQPIGRKSPMTPWGKKALGVKTRKTKKASNQFIIRRRKESK) is disordered.

The protein belongs to the universal ribosomal protein uL2 family. In terms of assembly, part of the 50S ribosomal subunit. Forms a bridge to the 30S subunit in the 70S ribosome.

One of the primary rRNA binding proteins. Required for association of the 30S and 50S subunits to form the 70S ribosome, for tRNA binding and peptide bond formation. It has been suggested to have peptidyltransferase activity; this is somewhat controversial. Makes several contacts with the 16S rRNA in the 70S ribosome. The protein is Large ribosomal subunit protein uL2 of Metamycoplasma arthritidis (strain 158L3-1) (Mycoplasma arthritidis).